The following is a 291-amino-acid chain: N-acetylmannosamine kinase (291 aa).

ATP contacts are provided by residues alanine 5–lysine 12 and glycine 132–cysteine 139. Residues histidine 156, cysteine 166, cysteine 168, and cysteine 173 each contribute to the Zn(2+) site.

The protein belongs to the ROK (NagC/XylR) family. NanK subfamily. As to quaternary structure, homodimer.

It carries out the reaction an N-acyl-D-mannosamine + ATP = an N-acyl-D-mannosamine 6-phosphate + ADP + H(+). The protein operates within amino-sugar metabolism; N-acetylneuraminate degradation; D-fructose 6-phosphate from N-acetylneuraminate: step 2/5. Functionally, catalyzes the phosphorylation of N-acetylmannosamine (ManNAc) to ManNAc-6-P. This Salmonella arizonae (strain ATCC BAA-731 / CDC346-86 / RSK2980) protein is N-acetylmannosamine kinase.